The chain runs to 86 residues: Small ribosomal subunit protein bS16 (86 aa).

Belongs to the bacterial ribosomal protein bS16 family.

The polypeptide is Small ribosomal subunit protein bS16 (Bordetella petrii (strain ATCC BAA-461 / DSM 12804 / CCUG 43448)).